A 213-amino-acid chain; its full sequence is uncharacterized protein (213 aa).

This is an uncharacterized protein from Magallana gigas (Pacific oyster).